We begin with the raw amino-acid sequence, 456 residues long: Glycine--tRNA ligase (456 aa).

Substrate-binding residues include R98 and E168. Residues 200-202, 210-215, 285-286, and 329-332 contribute to the ATP site; these read RNE, FRTREF, EL, and GVER. Position 215–219 (215–219) interacts with substrate; that stretch reads FEQME. 325-329 contributes to the substrate binding site; sequence EPSVG.

Belongs to the class-II aminoacyl-tRNA synthetase family. In terms of assembly, homodimer.

The protein resides in the cytoplasm. The catalysed reaction is tRNA(Gly) + glycine + ATP = glycyl-tRNA(Gly) + AMP + diphosphate. Catalyzes the attachment of glycine to tRNA(Gly). The polypeptide is Glycine--tRNA ligase (Mycoplasma mycoides subsp. mycoides SC (strain CCUG 32753 / NCTC 10114 / PG1)).